The chain runs to 314 residues: 4-hydroxy-3-methylbut-2-enyl diphosphate reductase (314 aa).

A [4Fe-4S] cluster-binding site is contributed by Cys12. (2E)-4-hydroxy-3-methylbut-2-enyl diphosphate contacts are provided by His41 and His74. Positions 41 and 74 each coordinate dimethylallyl diphosphate. The isopentenyl diphosphate site is built by His41 and His74. Cys96 contributes to the [4Fe-4S] cluster binding site. Position 124 (His124) interacts with (2E)-4-hydroxy-3-methylbut-2-enyl diphosphate. His124 is a binding site for dimethylallyl diphosphate. His124 provides a ligand contact to isopentenyl diphosphate. Glu126 acts as the Proton donor in catalysis. Thr168 provides a ligand contact to (2E)-4-hydroxy-3-methylbut-2-enyl diphosphate. Cys198 provides a ligand contact to [4Fe-4S] cluster. Ser226, Ser227, Asn228, and Ser270 together coordinate (2E)-4-hydroxy-3-methylbut-2-enyl diphosphate. The dimethylallyl diphosphate site is built by Ser226, Ser227, Asn228, and Ser270. Positions 226, 227, 228, and 270 each coordinate isopentenyl diphosphate.

It belongs to the IspH family. It depends on [4Fe-4S] cluster as a cofactor.

The enzyme catalyses isopentenyl diphosphate + 2 oxidized [2Fe-2S]-[ferredoxin] + H2O = (2E)-4-hydroxy-3-methylbut-2-enyl diphosphate + 2 reduced [2Fe-2S]-[ferredoxin] + 2 H(+). It catalyses the reaction dimethylallyl diphosphate + 2 oxidized [2Fe-2S]-[ferredoxin] + H2O = (2E)-4-hydroxy-3-methylbut-2-enyl diphosphate + 2 reduced [2Fe-2S]-[ferredoxin] + 2 H(+). It functions in the pathway isoprenoid biosynthesis; dimethylallyl diphosphate biosynthesis; dimethylallyl diphosphate from (2E)-4-hydroxy-3-methylbutenyl diphosphate: step 1/1. It participates in isoprenoid biosynthesis; isopentenyl diphosphate biosynthesis via DXP pathway; isopentenyl diphosphate from 1-deoxy-D-xylulose 5-phosphate: step 6/6. Catalyzes the conversion of 1-hydroxy-2-methyl-2-(E)-butenyl 4-diphosphate (HMBPP) into a mixture of isopentenyl diphosphate (IPP) and dimethylallyl diphosphate (DMAPP). Acts in the terminal step of the DOXP/MEP pathway for isoprenoid precursor biosynthesis. This is 4-hydroxy-3-methylbut-2-enyl diphosphate reductase from Pseudomonas aeruginosa (strain LESB58).